A 214-amino-acid chain; its full sequence is tRNA (guanine-N(7)-)-methyltransferase (214 aa).

Glu-44, Asp-69, Asp-96, and Asp-118 together coordinate S-adenosyl-L-methionine. Asp-118 is a catalytic residue. Lys-122 serves as a coordination point for substrate. Positions 124-129 (KHEKRR) are interaction with RNA. Substrate-binding positions include Asp-154 and 191-194 (TEYE).

The protein belongs to the class I-like SAM-binding methyltransferase superfamily. TrmB family.

It catalyses the reaction guanosine(46) in tRNA + S-adenosyl-L-methionine = N(7)-methylguanosine(46) in tRNA + S-adenosyl-L-homocysteine. It participates in tRNA modification; N(7)-methylguanine-tRNA biosynthesis. Its function is as follows. Catalyzes the formation of N(7)-methylguanine at position 46 (m7G46) in tRNA. This is tRNA (guanine-N(7)-)-methyltransferase from Enterococcus faecalis (strain ATCC 700802 / V583).